Reading from the N-terminus, the 228-residue chain is MNYEAIVLAAGQGKRMNAGMNKQFIELGGEPLIVRTLKVFDGDERCNGIVLVVNPTERGQFEQLFERYRIRKVVAFADGGQERQHSVYNGLQALRSGEIVLIHDGARPFVRIRHLHELADAAVQYGAAIPAVRVKDTIKKVDGLFVEQTIDRSSLWAVQTPQAFRLSLIMEAHEEAKKAGYLGTDDASLVERLGRPVKILEGDYRNIKLTTPEDLLFAEAILASRIAE.

The protein belongs to the IspD/TarI cytidylyltransferase family. IspD subfamily.

The enzyme catalyses 2-C-methyl-D-erythritol 4-phosphate + CTP + H(+) = 4-CDP-2-C-methyl-D-erythritol + diphosphate. The protein operates within isoprenoid biosynthesis; isopentenyl diphosphate biosynthesis via DXP pathway; isopentenyl diphosphate from 1-deoxy-D-xylulose 5-phosphate: step 2/6. Its function is as follows. Catalyzes the formation of 4-diphosphocytidyl-2-C-methyl-D-erythritol from CTP and 2-C-methyl-D-erythritol 4-phosphate (MEP). In Geobacillus thermodenitrificans (strain NG80-2), this protein is 2-C-methyl-D-erythritol 4-phosphate cytidylyltransferase.